We begin with the raw amino-acid sequence, 470 residues long: Uronate isomerase (470 aa).

The protein belongs to the metallo-dependent hydrolases superfamily. Uronate isomerase family.

It carries out the reaction D-glucuronate = D-fructuronate. The catalysed reaction is aldehydo-D-galacturonate = keto-D-tagaturonate. It participates in carbohydrate metabolism; pentose and glucuronate interconversion. The polypeptide is Uronate isomerase (Cutibacterium acnes (strain DSM 16379 / KPA171202) (Propionibacterium acnes)).